The primary structure comprises 146 residues: Mitochondrial DnaJ homolog 2 (146 aa).

The J domain maps to 85–146 (EALLILDISA…LERSVLLRKR (62 aa)).

Interacts with PAM16/TIM16 and is recruited by the PAM complex.

The protein localises to the mitochondrion inner membrane. Functionally, plays a role in mitochondrial biogenesis and protein folding. Participates in the translocation of transit peptide-containing proteins from the inner membrane into the mitochondrial matrix in an ATP-dependent manner, probably by stimulating activity of mtHSP70 (SSC1). In Saccharomyces cerevisiae (strain ATCC 204508 / S288c) (Baker's yeast), this protein is Mitochondrial DnaJ homolog 2 (MDJ2).